We begin with the raw amino-acid sequence, 486 residues long: Citrate synthase 3, mitochondrial (486 aa).

Residues 1–23 (MVQRLLPGAHICRRSFNSSAIIK) constitute a mitochondrion transit peptide. Active-site residues include histidine 315, histidine 361, and aspartate 419. Positions 484–486 (NKL) match the Microbody targeting signal motif.

This sequence belongs to the citrate synthase family.

Its subcellular location is the mitochondrion. The catalysed reaction is oxaloacetate + acetyl-CoA + H2O = citrate + CoA + H(+). It functions in the pathway carbohydrate metabolism; tricarboxylic acid cycle; isocitrate from oxaloacetate: step 1/2. Dual specificity mitochondrial citrate and methylcitrate synthase with similar catalytic efficiency with both acetyl-CoA and propionyl-CoA. The protein is Citrate synthase 3, mitochondrial of Saccharomyces cerevisiae (strain ATCC 204508 / S288c) (Baker's yeast).